The following is a 196-amino-acid chain: GSARVSACVASIAKQDYAGELRVYVVDDGSGNRNAIIPVHDHYACDPRFRFILMPKNVGKRKASIVAIGKSSGDLVLNVDSDTTMRRRVASKLASKSRIREDAPTILMRNAGFRTEYVPEAIAETVVPNSMNAYLRQQRRWARSSFADTLAVLLLLGLDRYLTLDEIGGNLGPLLLALSVVSGLAQLALTATVPWS.

Belongs to the NodC/HAS family.

Its subcellular location is the cell membrane. Involved in the synthesis of Nod factor, a sulfated N-acyl-beta-1,4-tetrasaccharide of N-acetylglucosamine which initiates a series of events in the host plant species leading eventually to nodulation. This Rhizobium sp. (strain MPIK3030) protein is N-acetylglucosaminyltransferase (nodC).